The chain runs to 373 residues: NAD-dependent protein deacetylase SIR2rp1 (373 aa).

The region spanning 12-349 is the Deacetylase sirtuin-type domain; the sequence is HALGEPTVEG…LKLAECLGLR (338 aa). NAD(+) contacts are provided by residues 39–59 and 124–127; these read GAGASVAAGIPDFRSSDTGIY and QNID. H144 acts as the Proton acceptor in catalysis. Residues C152, C155, C176, and C179 each coordinate Zn(2+). NAD(+) is bound by residues 216-218 and 241-243; these read GTS and NRE. The interval 263 to 313 is disordered; that stretch reads DAVAKEGRSSSSQSRSPSASARREEGGTEDGSSSPNEEVEDASTSSSSDGY. Positions 271–282 are enriched in low complexity; it reads SSSSQSRSPSAS. NAD(+) is bound at residue C335.

The protein belongs to the sirtuin family. Class I subfamily. Requires Zn(2+) as cofactor.

The protein localises to the nucleus. The enzyme catalyses N(6)-acetyl-L-lysyl-[protein] + NAD(+) + H2O = 2''-O-acetyl-ADP-D-ribose + nicotinamide + L-lysyl-[protein]. NAD-dependent deacetylase, which probably acts as a regulator of gene expression believed to help form modified chromatin structures on the genes it regulates. In Leishmania major, this protein is NAD-dependent protein deacetylase SIR2rp1 (SIR2rp1).